A 146-amino-acid chain; its full sequence is Chorion class A protein Ld3/Ld29 (146 aa).

The N-terminal stretch at 1 to 21 is a signal peptide; sequence MNTFALLSVFIQACLVQSVFS.

It belongs to the chorion protein family.

This protein is one of many from the eggshell of the gypsy moth. This chain is Chorion class A protein Ld3/Ld29, found in Lymantria dispar (Gypsy moth).